The following is a 412-amino-acid chain: Solute carrier family 22 member 18 (412 aa).

10 helical membrane-spanning segments follow: residues 16-36 (GIII…FMQF), 51-71 (VSFG…GPVF), 117-137 (LPAA…DLTA), 148-168 (LGLC…TLST), 176-196 (AFLA…CIPV), 232-252 (FLVK…FSII), 264-284 (AGYL…LVIG), 294-314 (ALLR…ALMS), 316-336 (VFHF…LNIV), and 380-400 (GVSI…LVLW).

It belongs to the major facilitator (TC 2.A.1) superfamily. Organic cation transporter (TC 2.A.1.19) family.

The protein resides in the apical cell membrane. Functionally, may act as a transporter of organic cations based on a proton efflux antiport mechanism. May play a role in the transport of chloroquine and quinidine-related compounds in kidney. Plays a role in the regulation of lipid metabolism. The protein is Solute carrier family 22 member 18 (Slc67a1) of Rattus norvegicus (Rat).